The following is a 363-amino-acid chain: 3-isopropylmalate dehydrogenase (363 aa).

78–91 (GPKWENLPPESQPE) provides a ligand contact to NAD(+). Substrate-binding residues include Arg99, Arg109, Arg138, and Asp227. Mg(2+) contacts are provided by Asp227, Asp251, and Asp255. Residue 285–297 (GSAPDIAGKNIAN) participates in NAD(+) binding.

It belongs to the isocitrate and isopropylmalate dehydrogenases family. LeuB type 1 subfamily. In terms of assembly, homodimer. Mg(2+) serves as cofactor. The cofactor is Mn(2+).

It localises to the cytoplasm. It catalyses the reaction (2R,3S)-3-isopropylmalate + NAD(+) = 4-methyl-2-oxopentanoate + CO2 + NADH. Its pathway is amino-acid biosynthesis; L-leucine biosynthesis; L-leucine from 3-methyl-2-oxobutanoate: step 3/4. In terms of biological role, catalyzes the oxidation of 3-carboxy-2-hydroxy-4-methylpentanoate (3-isopropylmalate) to 3-carboxy-4-methyl-2-oxopentanoate. The product decarboxylates to 4-methyl-2 oxopentanoate. This Salmonella choleraesuis (strain SC-B67) protein is 3-isopropylmalate dehydrogenase.